The following is a 1131-amino-acid chain: PPi-type phosphoenolpyruvate carboxykinase (1131 aa).

It belongs to the PPi-type phosphoenolpyruvate carboxykinase family. As to quaternary structure, monomer and trimer; forms heterotrimers with PEPCK2 and PEPCK3.

It catalyses the reaction oxaloacetate + diphosphate = phosphoenolpyruvate + phosphate + CO2. Its function is as follows. Inorganic pyrophosphate (PPi)-dependent phosphoenolpyruvate carboxykinase, which regulates the carbon flow of the central metabolism by fixing CO(2) to phosphoenolpyruvate to produce oxaloacetate. Can also produce pyruvate and diphosphate from phosphoenolpyruvate and phosphate. The chain is PPi-type phosphoenolpyruvate carboxykinase from Propionibacterium freudenreichii subsp. freudenreichii.